Consider the following 311-residue polypeptide: Aquaporin Lacbi1:392091 (311 aa).

The Cytoplasmic portion of the chain corresponds to 1 to 16 (MHPQVASLFDNVYEDL). Residues 17 to 37 (AAATLEFIGTAFFLLFGLGGI) form a helical membrane-spanning segment. The Extracellular segment spans residues 38–56 (QASTAEDTASGQPPASGIE). A helical transmembrane segment spans residues 57 to 77 (HVLYISTCMGLSLVVSAWLFF). A topological domain (cytoplasmic) is located at residue arginine 78. Residues 79–99 (VTGGLFNPNISFALLLVGGLK) traverse the membrane as a helical segment. The NPA 1 signature appears at 85–87 (NPN). Residue proline 100 is a topological domain, extracellular. Residues 101–121 (LRFVLFCIAQLTGAIAGAAIV) form a helical membrane-spanning segment. The Cytoplasmic portion of the chain corresponds to 122-143 (RGLTSAPLSVNNVLQQGTSAAQ). A helical transmembrane segment spans residues 144–164 (GVFIEMFITAALVLSVLMLAA). Residues 165 to 168 (EKHE) lie on the Extracellular side of the membrane. Residues 169-189 (ATPFAPVGIGLTLFACHLFAV) traverse the membrane as a helical segment. Topologically, residues 190–215 (YYTGAAMNSARAFGPAVISGFPEPQH) are cytoplasmic. The short motif at 197–199 (NSA) is the NPA 2 element. Residues 216–236 (WVYWVGPFLGSLLGAGFYATL) form a helical membrane-spanning segment. Residues 237–311 (KHYKYWHLNP…TSSRTNFSPV (75 aa)) lie on the Extracellular side of the membrane. Positions 276-311 (DEETRNGCASNEEGVRATGDEKSSNATSSRTNFSPV) are disordered. Basic and acidic residues predominate over residues 288–298 (EGVRATGDEKS). Polar residues predominate over residues 299–311 (SNATSSRTNFSPV). An N-linked (GlcNAc...) asparagine glycan is attached at asparagine 300.

This sequence belongs to the MIP/aquaporin (TC 1.A.8) family.

The protein localises to the membrane. The catalysed reaction is H2O(in) = H2O(out). It catalyses the reaction NH4(+)(in) = NH4(+)(out). Functionally, water channel required to facilitate the transport of water across membranes. Also enables low but statistically significant ammonium permeability. May be involved in fungal nitrogen (ammonium) support of the plant host in symbiosis. The polypeptide is Aquaporin Lacbi1:392091 (Laccaria bicolor (strain S238N-H82 / ATCC MYA-4686) (Bicoloured deceiver)).